Reading from the N-terminus, the 1055-residue chain is MDS1 and EVI1 complex locus protein EVI1-A (1055 aa).

C2H2-type zinc fingers lie at residues 21-48 (YRCE…VTPH), 75-97 (HECK…LLSH), and 103-125 (YKCD…QMSH). The C2H2-type 4; degenerate zinc finger occupies 131-155 (YECENCSKQVFTDPSNLQRHIRSQH). C2H2-type zinc fingers lie at residues 161–183 (HACS…KHIH) and 189–211 (FVCE…KRMH). Residues 218-240 (IKCKDCGQMFSTTSSLNKHRRFC) form a C2H2-type 7; atypical zinc finger. Disordered stretches follow at residues 324-345 (PVKG…VNQP), 372-423 (FITE…SDKD), and 531-621 (VPLK…PELP). The segment covering 332 to 345 (EQSSKSQSPHVNQP) has biased composition (polar residues). The span at 381–392 (RPHEKISDHSES) shows a compositional bias: basic and acidic residues. Residues 399-413 (STPSGSDLETTSGSD) show a composition bias toward polar residues. The short motif at 422–435 (KDKLKENGKLYKDK) is the Nuclear localization signal element. Residues 531-566 (VPLKIEPESPKETKKVQKGKTESPFDLTTKRKEEKA) are compositionally biased toward basic and acidic residues. The CTBP-binding motif 1 signature appears at 554–558 (PFDLT). Polar residues predominate over residues 569-583 (NVPSKSGAPTSSNHD). The CTBP-binding motif 2 motif lies at 585 to 589 (PLDLS). Residues 591–601 (GSRSRAATTKQ) are compositionally biased toward polar residues. The span at 602–621 (TEPRKNHIFNEKKDMDPELP) shows a compositional bias: basic and acidic residues. 3 C2H2-type zinc fingers span residues 734 to 756 (YTCR…LRTH), 762 to 785 (YRCK…RNIH), and 791 to 813 (FKCH…LKKH). Disordered regions lie at residues 813–837 (HENG…GPIL) and 922–957 (SVDE…EDFK). Residues 816 to 827 (GNLSGTAASSPH) show a composition bias toward polar residues. Residues 944–954 (DDEDDDDDEEE) are compositionally biased toward acidic residues.

As to quaternary structure, homooligomer. Interacts with ctbp. Expressed dynamically during embryonic development; in the developing pronephros, specific areas of the brain (forebrain, midbrain and hindbrain), and in the majority of the visceral arch, and head mesenchyme derived from neural crest cells. Within the pronephros, expressed in the ventroposterior region of the pronephros anlagen from stage 20 (and is absent from the splanchnic layer that forms the glomus), then expression becomes restricted to the distal tubule and duct by the tadpole stage. In adults, expressed in various tissues including kidney, lung, testis, spleen and stomach.

It is found in the nucleus. The protein resides in the nucleus speckle. Functionally, transcriptional repressor during pronephros development. Plays a role in regionalization of the pronephros; may promote formation of the distal tubule and duct over formation of the glomus and proximal tubule. The polypeptide is MDS1 and EVI1 complex locus protein EVI1-A (mecom-a) (Xenopus laevis (African clawed frog)).